Reading from the N-terminus, the 258-residue chain is Ubiquinone/menaquinone biosynthesis C-methyltransferase UbiE (258 aa).

The tract at residues 1-21 (MPESRTSADGGMETSYGFREV) is disordered. Residues T81, D102, and 130 to 131 (NA) contribute to the S-adenosyl-L-methionine site.

The protein belongs to the class I-like SAM-binding methyltransferase superfamily. MenG/UbiE family.

The enzyme catalyses a 2-demethylmenaquinol + S-adenosyl-L-methionine = a menaquinol + S-adenosyl-L-homocysteine + H(+). The catalysed reaction is a 2-methoxy-6-(all-trans-polyprenyl)benzene-1,4-diol + S-adenosyl-L-methionine = a 5-methoxy-2-methyl-3-(all-trans-polyprenyl)benzene-1,4-diol + S-adenosyl-L-homocysteine + H(+). Its pathway is quinol/quinone metabolism; menaquinone biosynthesis; menaquinol from 1,4-dihydroxy-2-naphthoate: step 2/2. It functions in the pathway cofactor biosynthesis; ubiquinone biosynthesis. Methyltransferase required for the conversion of demethylmenaquinol (DMKH2) to menaquinol (MKH2) and the conversion of 2-polyprenyl-6-methoxy-1,4-benzoquinol (DDMQH2) to 2-polyprenyl-3-methyl-6-methoxy-1,4-benzoquinol (DMQH2). This is Ubiquinone/menaquinone biosynthesis C-methyltransferase UbiE from Rhizobium leguminosarum bv. trifolii (strain WSM2304).